Here is a 37-residue protein sequence, read N- to C-terminus: Large ribosomal subunit protein bL36 (37 aa).

It belongs to the bacterial ribosomal protein bL36 family.

This is Large ribosomal subunit protein bL36 from Variovorax paradoxus (strain S110).